Here is a 63-residue protein sequence, read N- to C-terminus: Metallothionein-like protein type 3 (63 aa).

The protein belongs to the metallothionein superfamily. Type 15 family.

Its function is as follows. Metallothioneins have a high content of cysteine residues that bind various heavy metals. The protein is Metallothionein-like protein type 3 of Actinidia deliciosa (Kiwi).